A 317-amino-acid polypeptide reads, in one-letter code: Beta-ketoacyl-[acyl-carrier-protein] synthase III (317 aa).

Residues Cys-112 and His-244 contribute to the active site. The segment at 245 to 249 (QANLR) is ACP-binding. The active site involves Asn-274.

This sequence belongs to the thiolase-like superfamily. FabH family. In terms of assembly, homodimer.

It localises to the cytoplasm. It catalyses the reaction malonyl-[ACP] + acetyl-CoA + H(+) = 3-oxobutanoyl-[ACP] + CO2 + CoA. It participates in lipid metabolism; fatty acid biosynthesis. Catalyzes the condensation reaction of fatty acid synthesis by the addition to an acyl acceptor of two carbons from malonyl-ACP. Catalyzes the first condensation reaction which initiates fatty acid synthesis and may therefore play a role in governing the total rate of fatty acid production. Possesses both acetoacetyl-ACP synthase and acetyl transacylase activities. Its substrate specificity determines the biosynthesis of branched-chain and/or straight-chain of fatty acids. This chain is Beta-ketoacyl-[acyl-carrier-protein] synthase III, found in Enterobacter sp. (strain 638).